Here is an 84-residue protein sequence, read N- to C-terminus: Large ribosomal subunit protein bL31B (84 aa).

It belongs to the bacterial ribosomal protein bL31 family. Type B subfamily. In terms of assembly, part of the 50S ribosomal subunit.

The protein is Large ribosomal subunit protein bL31B of Photorhabdus laumondii subsp. laumondii (strain DSM 15139 / CIP 105565 / TT01) (Photorhabdus luminescens subsp. laumondii).